The primary structure comprises 426 residues: MHKKEIIALLLAGGQGSRLGVLTKNIAKPAVLYGGKYRIIDFSLSNCVNSDIDTVGVLTQYQPLELNAHIGIGKPWDMDRINGGVTILSPYLKAEIGEWYKGTANAVFQNIHYVDKYSPKYVIILSGDHVYKMNYSQMLDFHKENNADATISVINVPWEEASRYGIMNTYENGKIYEFEEKPQNPKSNLASMGVYIFNWEVLKEYLIRDDQNEESAHDFGKNIIPMMLKEGRSMWAYKFNGYWRDVGTIQAYWESNMDLISRVPEFNLFDPAWKIYTPNPVKPAHYIGPTGSVKKSIVAEGCMIYGSVRNSVLFPGVYVSEGAEIVDSIVMSDSVIGENTQIYKCIIGEEVKVGKNVRMGIGENIPNELKPHLYDSGITVVGEKAVVPDGCQIGKNVVIDPYITAEEFPSLNIESAKSVLKGGETE.

Residues Tyr100, Gly165, 180 to 181 (EK), and Ser191 each bind alpha-D-glucose 1-phosphate.

The protein belongs to the bacterial/plant glucose-1-phosphate adenylyltransferase family. Homotetramer.

The catalysed reaction is alpha-D-glucose 1-phosphate + ATP + H(+) = ADP-alpha-D-glucose + diphosphate. It participates in glycan biosynthesis; glycogen biosynthesis. Involved in the biosynthesis of ADP-glucose, a building block required for the elongation reactions to produce glycogen. Catalyzes the reaction between ATP and alpha-D-glucose 1-phosphate (G1P) to produce pyrophosphate and ADP-Glc. The protein is Glucose-1-phosphate adenylyltransferase of Acetivibrio thermocellus (strain ATCC 27405 / DSM 1237 / JCM 9322 / NBRC 103400 / NCIMB 10682 / NRRL B-4536 / VPI 7372) (Clostridium thermocellum).